A 126-amino-acid polypeptide reads, in one-letter code: Ribonuclease P protein component (126 aa).

It belongs to the RnpA family. As to quaternary structure, consists of a catalytic RNA component (M1 or rnpB) and a protein subunit.

The enzyme catalyses Endonucleolytic cleavage of RNA, removing 5'-extranucleotides from tRNA precursor.. RNaseP catalyzes the removal of the 5'-leader sequence from pre-tRNA to produce the mature 5'-terminus. It can also cleave other RNA substrates such as 4.5S RNA. The protein component plays an auxiliary but essential role in vivo by binding to the 5'-leader sequence and broadening the substrate specificity of the ribozyme. In Synechococcus sp. (strain JA-3-3Ab) (Cyanobacteria bacterium Yellowstone A-Prime), this protein is Ribonuclease P protein component.